The primary structure comprises 337 residues: ATP-dependent 6-phosphofructokinase (337 aa).

An ATP-binding site is contributed by Gly-11. Arg-21 to Arg-25 is an ADP binding site. ATP contacts are provided by residues Arg-72–Tyr-73 and Gly-102–Ser-105. Asp-103 contributes to the Mg(2+) binding site. A substrate-binding site is contributed by Thr-125–Asp-127. Asp-127 functions as the Proton acceptor in the catalytic mechanism. Residue Arg-154 participates in ADP binding. Residues Arg-162 and Met-169–Arg-171 contribute to the substrate site. Residues Gly-185–Asp-187, Arg-212, and Lys-214–His-216 contribute to the ADP site. Residues Glu-223, Arg-245, and His-251–Arg-254 each bind substrate.

Belongs to the phosphofructokinase type A (PFKA) family. ATP-dependent PFK group I subfamily. Prokaryotic clade 'B1' sub-subfamily. Homotetramer. Mg(2+) serves as cofactor.

It is found in the cytoplasm. The enzyme catalyses beta-D-fructose 6-phosphate + ATP = beta-D-fructose 1,6-bisphosphate + ADP + H(+). It functions in the pathway carbohydrate degradation; glycolysis; D-glyceraldehyde 3-phosphate and glycerone phosphate from D-glucose: step 3/4. With respect to regulation, allosterically activated by ADP and other diphosphonucleosides, and allosterically inhibited by phosphoenolpyruvate. Functionally, catalyzes the phosphorylation of D-fructose 6-phosphate to fructose 1,6-bisphosphate by ATP, the first committing step of glycolysis. This chain is ATP-dependent 6-phosphofructokinase, found in Streptococcus equi subsp. zooepidemicus (strain H70).